A 628-amino-acid chain; its full sequence is MNKDYDVIVVGAGHAGVEAALASARLGNKTALITLYLDTISMMSCNPSIGGPGKSNLVTEIDVLGGEMGRHIDEFNLQLKDLNTSKGPAARITRGQADKYKYRRKMREKLEKTENISLIQDCVEEILVEDIKDTQNSNYIKKITGIKTRLGIIYNAKVIVLATGTFLKGKIVIGDVSYSAGRQGETSAEKLSDSLRELGIKIERYQTATPPRLDKKTIDFSQLEELKGEEHPRYFSLFTKKEKNNTVPTWLTYTSDKTIEVIKEMMKFSPIVSGMVNTHGPRHCPSIDRKVLNFPDKEKHQIFLEMESENSDEIYVNGLTTAMPAFVQEKILKTIKGLENAKIMRYGYAVEYDYAPASQLYPSLENKKISGLFFAGQINGTSGYEEAAAQGFIAGVNAAKKIKGEKPVIIDRSEAYIGVLIDDLIHKKTPEPYRVLPSRAEYRLTLRYDNAFMRLFDKIKEVGIVDKDKIEFLEKSINDVYMEINNLKNISVSMNEANKFLESLDIEERFVKGVKASEILKIKDVSYDNLKVFLNLNDYEDFVKNQIETMIKYEIFIERENKQIEKFKKLEHMYIPENINYDEIKGISNIARAGLDEVRPLSIGEATRISGVTSNDITLIIAYMNIKL.

An FAD-binding site is contributed by 11 to 16; the sequence is GAGHAG. Residue 280-294 participates in NAD(+) binding; that stretch reads GPRHCPSIDRKVLNF.

It belongs to the MnmG family. Homodimer. Heterotetramer of two MnmE and two MnmG subunits. FAD serves as cofactor.

It is found in the cytoplasm. NAD-binding protein involved in the addition of a carboxymethylaminomethyl (cmnm) group at the wobble position (U34) of certain tRNAs, forming tRNA-cmnm(5)s(2)U34. This Fusobacterium nucleatum subsp. nucleatum (strain ATCC 25586 / DSM 15643 / BCRC 10681 / CIP 101130 / JCM 8532 / KCTC 2640 / LMG 13131 / VPI 4355) protein is tRNA uridine 5-carboxymethylaminomethyl modification enzyme MnmG 1.